Consider the following 459-residue polypeptide: Cysteine--tRNA ligase (459 aa).

Residue cysteine 28 participates in Zn(2+) binding. The 'HIGH' region motif lies at 30–40; it reads VTIYDLCHIGH. Zn(2+) contacts are provided by cysteine 209, histidine 234, and glutamate 238. The short motif at 266–270 is the 'KMSKS' region element; sequence KMSKS. Lysine 269 is a binding site for ATP.

Belongs to the class-I aminoacyl-tRNA synthetase family. As to quaternary structure, monomer. Zn(2+) serves as cofactor.

The protein localises to the cytoplasm. It carries out the reaction tRNA(Cys) + L-cysteine + ATP = L-cysteinyl-tRNA(Cys) + AMP + diphosphate. The chain is Cysteine--tRNA ligase from Vibrio cholerae serotype O1 (strain ATCC 39541 / Classical Ogawa 395 / O395).